A 500-amino-acid chain; its full sequence is L-arabinose isomerase (500 aa).

4 residues coordinate Mn(2+): E306, E333, H350, and H450.

This sequence belongs to the arabinose isomerase family. Homohexamer. Mn(2+) serves as cofactor.

It carries out the reaction beta-L-arabinopyranose = L-ribulose. The protein operates within carbohydrate degradation; L-arabinose degradation via L-ribulose; D-xylulose 5-phosphate from L-arabinose (bacterial route): step 1/3. Functionally, catalyzes the conversion of L-arabinose to L-ribulose. In Salmonella typhi, this protein is L-arabinose isomerase.